The sequence spans 368 residues: tRNA 2-selenouridine synthase (368 aa).

One can recognise a Rhodanese domain in the interval 15–138 (FLNQHPIMDV…MRQYLIGVIE (124 aa)). Cys-98 serves as the catalytic S-selanylcysteine intermediate.

Belongs to the SelU family. As to quaternary structure, monomer.

It carries out the reaction 5-methylaminomethyl-2-thiouridine(34) in tRNA + selenophosphate + (2E)-geranyl diphosphate + H2O + H(+) = 5-methylaminomethyl-2-selenouridine(34) in tRNA + (2E)-thiogeraniol + phosphate + diphosphate. The catalysed reaction is 5-methylaminomethyl-2-thiouridine(34) in tRNA + (2E)-geranyl diphosphate = 5-methylaminomethyl-S-(2E)-geranyl-thiouridine(34) in tRNA + diphosphate. It catalyses the reaction 5-methylaminomethyl-S-(2E)-geranyl-thiouridine(34) in tRNA + selenophosphate + H(+) = 5-methylaminomethyl-2-(Se-phospho)selenouridine(34) in tRNA + (2E)-thiogeraniol. The enzyme catalyses 5-methylaminomethyl-2-(Se-phospho)selenouridine(34) in tRNA + H2O = 5-methylaminomethyl-2-selenouridine(34) in tRNA + phosphate. Its function is as follows. Involved in the post-transcriptional modification of the uridine at the wobble position (U34) of tRNA(Lys), tRNA(Glu) and tRNA(Gln). Catalyzes the conversion of 2-thiouridine (S2U-RNA) to 2-selenouridine (Se2U-RNA). Acts in a two-step process involving geranylation of 2-thiouridine (S2U) to S-geranyl-2-thiouridine (geS2U) and subsequent selenation of the latter derivative to 2-selenouridine (Se2U) in the tRNA chain. The chain is tRNA 2-selenouridine synthase from Shewanella baltica (strain OS185).